Here is a 37-residue protein sequence, read N- to C-terminus: MKVRASVRKICENCRMIRRRGKVMVVCSNPKHKQRQG.

The protein belongs to the bacterial ribosomal protein bL36 family.

It is found in the plastid. Its subcellular location is the chloroplast. The protein is Large ribosomal subunit protein bL36c of Staurastrum punctulatum (Green alga).